We begin with the raw amino-acid sequence, 334 residues long: UL-16 binding protein 5 (334 aa).

The N-terminal stretch at 1-25 (MAAAASPAFLLRLPLLLLLSSWCRT) is a signal peptide. Residues 26–223 (GLADPHSLCY…TMSSGTAQPR (198 aa)) are Extracellular-facing. The MHC class I alpha-1 like stretch occupies residues 29–117 (DPHSLCYDIT…IQLENYIPKE (89 aa)). The cysteines at positions 50 and 66 are disulfide-linked. N-linked (GlcNAc...) asparagine glycosylation is present at N82. The MHC class I alpha-2 like stretch occupies residues 118–210 (PLTLQARMSC…MDSTLEPSAG (93 aa)). A disulfide bridge links C127 with C190. Residue G218 is the site of GPI-anchor amidated glycine attachment. Positions 219–334 (TAQPRATATT…YSEPLQVSIS (116 aa)) are cleaved as a propeptide — removed in mature form. A helical transmembrane segment spans residues 224–243 (ATATTLILCCLLIMCLLICS). Residues 244–334 (RHSLTQSHGH…YSEPLQVSIS (91 aa)) are Cytoplasmic-facing.

It belongs to the MHC class I family. Interacts with KLRK1/NKG2D. As to quaternary structure, (Microbial infection) In CMV-infected cells, interacts with the viral glycoprotein UL16; this interaction causes RAET1G retention in the endoplasmic reticulum and cis-Golgi and prevents binding to and activation of KLRK1/NKG2D, providing CMV with an immune evasion mechanism. The functional form is cleaved C-terminally of the GPI-anchor and yields a 28 kDa protein. As to expression, isoform 1 is highly expressed in colon and in a number of tumor cell lines and highly restricted in normal tissues. Both isoforms are frequently expressed in cell lines derived from epithelial cancers, and in primary breast cancers.

It localises to the cell membrane. The protein localises to the endoplasmic reticulum. It is found in the secreted. Binds and activates the KLRK1/NKG2D receptor, mediating natural killer cell cytotoxicity. Its function is as follows. Down-regulates the expression of KLRK1 and stimulates natural killer cells to secrete IFNG. In terms of biological role, stimulates natural killer cells to secrete IFNG. The protein is UL-16 binding protein 5 of Homo sapiens (Human).